Reading from the N-terminus, the 1212-residue chain is DNA topoisomerase 1 (1212 aa).

The Toprim domain maps to 1–114; sequence MKLVVVESPA…DVERVTFNAI (114 aa). The Mg(2+) site is built by Glu7 and Asp80. A Topo IA-type catalytic domain is found at 130-556; it reads DNDLINAYLA…AFWHDFKPKT (427 aa). Positions 164 to 169 are interaction with DNA; it reads SAGRVQ. Residue Tyr293 is the O-(5'-phospho-DNA)-tyrosine intermediate of the active site. The C4-type zinc-finger motif lies at 592–619; it reads CPSCHTGRLALKGGRFGAFIACSNYPEC. 3 disordered regions span residues 687-742, 758-937, and 1107-1212; these read GKGN…GVST, ALAG…KARA, and RAKM…EVAE. Polar residues-rich tracts occupy residues 708 to 742 and 770 to 782; these read ASST…GVST and VSDN…SSTI. Basic and acidic residues predominate over residues 815–840; that stretch reads ADNRLLSHRNGDIDSRAIPADHKDSS. Polar residues-rich tracts occupy residues 881–890 and 897–906; these read AITSDNSPSD and STPSSATSSV. A compositionally biased stretch (basic and acidic residues) spans 921-934; sequence KADEQAKEEEESRK. The span at 1109–1140 shows a compositional bias: basic residues; that stretch reads KMPKKKKTKKAAAKKPAAKKTTTKKAAPKKAT. Over residues 1141–1151 the composition is skewed to low complexity; the sequence is TKTATPKSATT. The span at 1167 to 1182 shows a compositional bias: basic residues; the sequence is PAKKAVAKKTTAKKPA. Residues 1183 to 1199 show a composition bias toward low complexity; that stretch reads SKSATKKAPSSKTTAAK.

Belongs to the type IA topoisomerase family. Monomer. Mg(2+) is required as a cofactor.

It catalyses the reaction ATP-independent breakage of single-stranded DNA, followed by passage and rejoining.. Releases the supercoiling and torsional tension of DNA, which is introduced during the DNA replication and transcription, by transiently cleaving and rejoining one strand of the DNA duplex. Introduces a single-strand break via transesterification at a target site in duplex DNA. The scissile phosphodiester is attacked by the catalytic tyrosine of the enzyme, resulting in the formation of a DNA-(5'-phosphotyrosyl)-enzyme intermediate and the expulsion of a 3'-OH DNA strand. The free DNA strand then undergoes passage around the unbroken strand, thus removing DNA supercoils. Finally, in the religation step, the DNA 3'-OH attacks the covalent intermediate to expel the active-site tyrosine and restore the DNA phosphodiester backbone. The chain is DNA topoisomerase 1 from Zymomonas mobilis subsp. mobilis (strain ATCC 31821 / ZM4 / CP4).